The chain runs to 689 residues: Beta-galactosidase BbgII (689 aa).

Residues Arg-122 and Asn-160 each coordinate substrate. Glu-161 serves as the catalytic Proton donor. Residue Glu-320 is the Nucleophile of the active site. Substrate contacts are provided by residues Trp-328 and 368-371 (EKWH).

Belongs to the glycosyl hydrolase 42 family.

It carries out the reaction Hydrolysis of terminal non-reducing beta-D-galactose residues in beta-D-galactosides.. This Bifidobacterium bifidum (strain DSM 20082 / JCM 1254 / BCRC 11844 / KCTC 3440 / E319f (Variant a)) protein is Beta-galactosidase BbgII.